Consider the following 717-residue polypeptide: Nuclear factor of activated T-cells, cytoplasmic 1 (717 aa).

Residues Met1 to Lys38 are disordered. Residues Pro120 to Thr125 form a calcineurin-binding region. The tract at residues Leu128–Glu220 is transactivation domain A (TAD-A). The segment at Pro202 to Thr298 is disordered. The segment covering Gln203–Thr216 has biased composition (polar residues). Repeat copies occupy residues Ser205–Glu221 and Ser235–Glu251. The tract at residues Ser205–Asp300 is 3 X SP repeats. A phosphoserine mark is found at Ser235 and Ser239. Residues His238–Glu250 are compositionally biased toward polar residues. Position 247 is a phosphoserine; by PKA (Ser247). The short motif at Lys267–Lys269 is the Nuclear localization signal element. Phosphoserine; by PKA is present on residues Ser271 and Ser296. Repeat unit 3 spans residues Ser284–Asp300. The Nuclear export signal signature appears at Ser312–Thr323. Residues Pro411–Ala593 enclose the RHD domain. The DNA-binding element occupies Arg440–Gly447. A Nuclear localization signal motif is present at residues Lys683–Lys685.

As to quaternary structure, member of the multicomponent NFATC transcription complex that consists of at least two components, a pre-existing cytoplasmic component NFATC2 and an inducible nuclear component NFATC1. Other members such as NFATC4, NFATC3 or members of the activating protein-1 family, MAF, GATA4 and Cbp/p300 can also bind the complex. NFATC proteins bind to DNA as monomers. Interacts with HOMER2 and HOMER3; this interaction may compete with calcineurin/PPP3CA-binding and hence prevent NFATC1 dephosphorylation and activation. Interacts with TLE6/GRG6. Post-translationally, phosphorylated by NFATC-kinase and GSK3B; phosphorylation induces NFATC1 nuclear exit and dephosphorylation by calcineurin promotes nuclear import. Phosphorylation by PKA and DYRK2 negatively modulates nuclear accumulation, and promotes subsequent phosphorylation by GSK3B or casein kinase 1. Expressed in the submandibular gland (at protein level). Expressed in basal epidermal cells (at protein level). Expressed in spleen, skeletal muscle and skin. Express in the lung and thymus. Weakly expressed in heart, brain, liver and kidney. Not expressed in testis. Expressed in osteoclasts. Also expressed during TNFSF11/RANKL-induced differentiation of bone marrow-derived macrophages to osteoclasts.

The protein localises to the cytoplasm. It localises to the nucleus. Functionally, plays a role in the inducible expression of cytokine genes in T-cells, especially in the induction of the IL-2 or IL-4 gene transcription. Also controls gene expression in embryonic cardiac cells. Could regulate not only the activation and proliferation but also the differentiation and programmed death of T-lymphocytes as well as lymphoid and non-lymphoid cells. Required for osteoclastogenesis and regulates many genes important for osteoclast differentiation and function. The chain is Nuclear factor of activated T-cells, cytoplasmic 1 (Nfatc1) from Mus musculus (Mouse).